Reading from the N-terminus, the 410-residue chain is Calsequestrin-2 (410 aa).

Positions 1–19 (MKRTHLFIAGLYLLASCRA) are cleaved as a signal peptide. Residues 221-242 (MDEPIAIPDKPYTEEELVEFVK) are calcium regulated hydrophobic site. At Tyr-282 the chain carries Phosphotyrosine. N-linked (GlcNAc...) asparagine glycosylation is found at Asn-335 and Asn-395. The tract at residues 364-410 (DVLSGKINTEDDDNEEGDDGDDDEDDDDDDGNNSDEESNDDSDDDDE) is disordered. Residues 373 to 410 (EDDDNEEGDDGDDDEDDDDDDGNNSDEESNDDSDDDDE) show a composition bias toward acidic residues. A phosphoserine; by CK2 mark is found at Ser-397, Ser-401, and Ser-405.

Belongs to the calsequestrin family. As to quaternary structure, interacts with ASPH. Monomer, homodimer and homooligomer. Mostly monomeric in the absence of calcium. Forms higher oligomers in a calcium-dependent manner. Dimers associate to form tetramers, that then form linear homomer chains. Interacts with TRDN. Phosphorylation in the C-terminus, probably by CK2, moderately increases calcium buffering capacity. In terms of processing, N-glycosylated. Detected in heart muscle (at protein level).

The protein resides in the sarcoplasmic reticulum lumen. In terms of biological role, calsequestrin is a high-capacity, moderate affinity, calcium-binding protein and thus acts as an internal calcium store in muscle. Calcium ions are bound by clusters of acidic residues at the protein surface, especially at the interface between subunits. Can bind around 60 Ca(2+) ions. Regulates the release of lumenal Ca(2+) via the calcium release channel RYR2; this plays an important role in triggering muscle contraction. Plays a role in excitation-contraction coupling in the heart and in regulating the rate of heart beats. The sequence is that of Calsequestrin-2 (CASQ2) from Canis lupus familiaris (Dog).